We begin with the raw amino-acid sequence, 307 residues long: Secondary metabolism regulator LAE1 (307 aa).

The protein belongs to the methyltransferase superfamily. LaeA methyltransferase family. In terms of assembly, component of the heterotrimeric velvet complex composed of LAE1, VEL1 and VEL2; VEL1 acting as a bridging protein between LAE1 and VEL2.

Its subcellular location is the nucleus. The enzyme catalyses L-methionyl-[protein] + S-adenosyl-L-methionine = S-methyl-L-methionyl-[protein] + S-adenosyl-L-homocysteine. Methyltransferase that performs automethylation. No other methyl-accepting substrate has been identified yet. Component of the velvet transcription factor complex that acts as a global regulator for secondary metabolite gene expression. Controls the expression of the T-toxin gene cluster. Promotes oxidative stress tolerance and acts as a virulence factors during infection. Negatively regulate mycelial pigmentation and controls sexual development, as well as asexual development during vegetative growth. This chain is Secondary metabolism regulator LAE1, found in Cochliobolus heterostrophus (strain C5 / ATCC 48332 / race O) (Southern corn leaf blight fungus).